The following is a 364-amino-acid chain: Biotin synthase (364 aa).

The tract at residues 14–36 (DTIPPGTETPYASPSHARTEEAP) is disordered. In terms of domain architecture, Radical SAM core spans 70 to 308 (RKGPLATTCG…QRDILVCGGR (239 aa)). [4Fe-4S] cluster-binding residues include cysteine 88, cysteine 92, and cysteine 95. Positions 164 and 233 each coordinate [2Fe-2S] cluster.

The protein belongs to the radical SAM superfamily. Biotin synthase family. As to quaternary structure, homodimer. [4Fe-4S] cluster is required as a cofactor. It depends on [2Fe-2S] cluster as a cofactor.

It catalyses the reaction (4R,5S)-dethiobiotin + (sulfur carrier)-SH + 2 reduced [2Fe-2S]-[ferredoxin] + 2 S-adenosyl-L-methionine = (sulfur carrier)-H + biotin + 2 5'-deoxyadenosine + 2 L-methionine + 2 oxidized [2Fe-2S]-[ferredoxin]. The protein operates within cofactor biosynthesis; biotin biosynthesis; biotin from 7,8-diaminononanoate: step 2/2. Catalyzes the conversion of dethiobiotin (DTB) to biotin by the insertion of a sulfur atom into dethiobiotin via a radical-based mechanism. This chain is Biotin synthase, found in Nitratidesulfovibrio vulgaris (strain DSM 19637 / Miyazaki F) (Desulfovibrio vulgaris).